Reading from the N-terminus, the 264-residue chain is NAD kinase 1 (264 aa).

The Proton acceptor role is filled by aspartate 45. NAD(+) contacts are provided by residues 45–46 (DG), glycine 46, 122–123 (NE), arginine 148, aspartate 150, serine 158, 161–166 (TAYNKS), and histidine 223.

The protein belongs to the NAD kinase family. In terms of assembly, homotetramer. A divalent metal cation is required as a cofactor.

It localises to the cytoplasm. It carries out the reaction NAD(+) + ATP = ADP + NADP(+) + H(+). Competitively inhibited by 5'-thioacetyladenosine (TAA) and di-(5'-thioadenosine) (DTA). Its function is as follows. Involved in the regulation of the intracellular balance of NAD and NADP, and is a key enzyme in the biosynthesis of NADP. Catalyzes specifically the phosphorylation on 2'-hydroxyl of the adenosine moiety of NAD to yield NADP. This Listeria monocytogenes serovar 1/2a (strain ATCC BAA-679 / EGD-e) protein is NAD kinase 1.